A 772-amino-acid polypeptide reads, in one-letter code: Endoplasmic reticulum membrane sensor NFE2L1 (772 aa).

A helical; Signal-anchor for type II membrane protein membrane pass occupies residues 7-24 (YFTEGLIQFTILLSLIGV). Residues 191–199 (IFDYSHRQK) are cholesterol recognition/amino acid consensus (CRAC) region. The segment covering 198–216 (QKESEVDKELSDGRERGDG) has biased composition (basic and acidic residues). The tract at residues 198 to 223 (QKESEVDKELSDGRERGDGWRSAGGQ) is disordered. 8 N-linked (GlcNAc...) asparagine glycosylation sites follow: Asn-332, Asn-340, Asn-362, Asn-402, Asn-407, Asn-414, Asn-425, and Asn-429. A disordered region spans residues 472-531 (EEEFDSDSGLSLDSGHSPASLSSSEASSSSSSSSSSSSSSSSSSSSFSEEGAVGYSSDSE). Residues 478 to 519 (DSGLSLDSGHSPASLSSSEASSSSSSSSSSSSSSSSSSSSFS) are compositionally biased toward low complexity. Asn-574 carries N-linked (GlcNAc...) asparagine glycosylation. Residues 581–613 (PGTLDPEEPKLPSVGKKSSKEKPSEFLDKQMSR) are disordered. Over residues 598-613 (SSKEKPSEFLDKQMSR) the composition is skewed to basic and acidic residues. Residues 654-717 (LIRDIRRRGK…RQMKQKVQNL (64 aa)) form the bZIP domain. Positions 656 to 675 (RDIRRRGKNKMAAQNCRKRK) are basic motif. The leucine-zipper stretch occupies residues 682–696 (LERDVEDLQRDKSKL). The short motif at 761 to 768 (RRQERKQK) is the Nuclear localization signal element.

The protein belongs to the bZIP family. CNC subfamily. In terms of assembly, interacts (via the bZIP domain) with small MAF protein (MAFF, MAFG or MAFK); required for binding to antioxidant response elements (AREs) on DNA. In terms of processing, cleaved at Leu-104 following retrotranslocation, releasing the protein from the endoplasmic reticulum membrane and forming the transcription factor NRF1 that translocates into the nucleus.

Its subcellular location is the endoplasmic reticulum membrane. It is found in the nucleus. Endoplasmic reticulum membrane sensor that translocates into the nucleus in response to various stresses to act as a transcription factor. Constitutes a precursor of the transcription factor NRF1. Able to detect various cellular stresses, such as cholesterol excess, oxidative stress or proteasome inhibition. In response to stress, it is released from the endoplasmic reticulum membrane following cleavage and translocates into the nucleus to form the transcription factor NRF1. Acts as a key sensor of cholesterol excess: in excess cholesterol conditions, the endoplasmic reticulum membrane form of the protein directly binds cholesterol via its CRAC motif, preventing cleavage and release of the transcription factor NRF1, thereby allowing expression of genes promoting cholesterol removal. Involved in proteasome homeostasis: in response to proteasome inhibition, it is released from the endoplasmic reticulum membrane, translocates to the nucleus and activates expression of genes encoding proteasome subunits. Its function is as follows. CNC-type bZIP family transcription factor that translocates to the nucleus and regulates expression of target genes in response to various stresses. Heterodimerizes with small-Maf proteins (MAFF, MAFG or MAFK) and binds DNA motifs including the antioxidant response elements (AREs), which regulate expression of genes involved in oxidative stress response. Activates or represses expression of target genes, depending on the context. Plays a key role in cholesterol homeostasis by acting as a sensor of cholesterol excess: in low cholesterol conditions, translocates into the nucleus and represses expression of genes involved in defense against cholesterol excess. In excess cholesterol conditions, the endoplasmic reticulum membrane form of the protein directly binds cholesterol via its CRAC motif, preventing cleavage and release of the transcription factor NRF1, thereby allowing expression of genes promoting cholesterol removal. Critical for redox balance in response to oxidative stress: acts by binding the AREs motifs on promoters and mediating activation of oxidative stress response genes. Involved in proteasome homeostasis: in response to proteasome inhibition, mediates the 'bounce-back' of proteasome subunits by translocating into the nucleus and activating expression of genes encoding proteasome subunits. The polypeptide is Endoplasmic reticulum membrane sensor NFE2L1 (Gallus gallus (Chicken)).